Reading from the N-terminus, the 331-residue chain is T-cell acute lymphocytic leukemia protein 1 (331 aa).

Residues 1-22 (MTERPPSEAARSDPQLEGRDAA) are compositionally biased toward basic and acidic residues. Disordered regions lie at residues 1-27 (MTER…ASMA) and 40-86 (ETSR…EARH). Ser-12 is modified (phosphoserine). Residues 56 to 70 (ARGGPGGGPAGGGGA) are compositionally biased toward gly residues. The segment covering 72-86 (RDLKGRDAATAEARH) has biased composition (basic and acidic residues). A phosphoserine mark is found at Ser-122 and Ser-172. Residues 187–239 (VRRIFTNSRERWRQQNVNGAFAELRKLIPTHPPDKKLSKNEILRLAMKYINFL) enclose the bHLH domain. The disordered stretch occupies residues 249–331 (EGTQRAKTGK…LPAADGAGPR (83 aa)). Residues 263-275 (GAGGGGGGGGGGA) show a composition bias toward gly residues.

Efficient DNA binding requires dimerization with another bHLH protein. Forms heterodimers with TCF3. Binds to the LIM domain containing protein LMO2 and to DRG1. Can assemble in a complex with LDB1 and LMO2. Component of a TAL-1 complex composed at least of CBFA2T3, LDB1, TAL1 and TCF3. Interacts with SBNO2; this interaction inhibits TAL1 occupancy of the DCSTAMP promoter, leading to the activation of the DCSTAMP promoter by the transcription factor MITF. Post-translationally, phosphorylated on serine residues. Phosphorylation of Ser-122 is strongly stimulated by hypoxia. In terms of processing, ubiquitinated; subsequent to hypoxia-dependent phosphorylation of Ser-122, ubiquitination targets the protein for rapid degradation via the ubiquitin system. This process may be characteristic for microvascular endothelial cells, since it could not be observed in large vessel endothelial cells. As to expression, leukemic stem cell.

It localises to the nucleus. Functionally, implicated in the genesis of hemopoietic malignancies. It may play an important role in hemopoietic differentiation. Serves as a positive regulator of erythroid differentiation. This Homo sapiens (Human) protein is T-cell acute lymphocytic leukemia protein 1 (TAL1).